A 54-amino-acid chain; its full sequence is VTSYTLNEVVPLKDVVPEWVRIGFSATTGAEFAAHEVLSWSFHSELGGTSGSQK.

This sequence belongs to the leguminous lectin family. In terms of assembly, tetramer of two alpha and two beta chains.

The polypeptide is Lectin alpha chain (Lathyrus odoratus (Sweet pea)).